A 139-amino-acid polypeptide reads, in one-letter code: 3-hydroxyacyl-[acyl-carrier-protein] dehydratase FabZ (139 aa).

His47 is a catalytic residue.

Belongs to the thioester dehydratase family. FabZ subfamily.

The protein resides in the cytoplasm. The catalysed reaction is a (3R)-hydroxyacyl-[ACP] = a (2E)-enoyl-[ACP] + H2O. Functionally, involved in unsaturated fatty acids biosynthesis. Catalyzes the dehydration of short chain beta-hydroxyacyl-ACPs and long chain saturated and unsaturated beta-hydroxyacyl-ACPs. This chain is 3-hydroxyacyl-[acyl-carrier-protein] dehydratase FabZ, found in Clostridium perfringens (strain ATCC 13124 / DSM 756 / JCM 1290 / NCIMB 6125 / NCTC 8237 / Type A).